A 240-amino-acid polypeptide reads, in one-letter code: Peptidyl-tRNA hydrolase 2 (240 aa).

A tRNA-binding site is contributed by Tyr-60. His-65 acts as the Proton acceptor in catalysis. Positions 111, 113, and 159 each coordinate tRNA.

Belongs to the PTH family. In terms of assembly, monomer.

Its subcellular location is the cytoplasm. The enzyme catalyses an N-acyl-L-alpha-aminoacyl-tRNA + H2O = an N-acyl-L-amino acid + a tRNA + H(+). Its function is as follows. Hydrolyzes ribosome-free peptidyl-tRNAs (with 1 or more amino acids incorporated), which drop off the ribosome during protein synthesis, or as a result of ribosome stalling. Catalyzes the release of premature peptidyl moieties from peptidyl-tRNA molecules trapped in stalled 50S ribosomal subunits, and thus maintains levels of free tRNAs and 50S ribosomes. This chain is Peptidyl-tRNA hydrolase 2, found in Corynebacterium jeikeium (strain K411).